The chain runs to 483 residues: Proton-coupled amino acid transporter 2 (483 aa).

Residues Met1–Gln58 are Cytoplasmic-facing. Basic and acidic residues predominate over residues Ser26–Thr36. Positions Ser26–Ala46 are disordered. Residues Ala59 to Val79 traverse the membrane as a helical segment. The Extracellular segment spans residues Lys80–Asn81. Residues Ala82 to Met102 form a helical membrane-spanning segment. Over His103–His148 the chain is Cytoplasmic. A helical transmembrane segment spans residues Ile149–Leu169. Topologically, residues Ala170–Pro197 are extracellular. A helical transmembrane segment spans residues Thr198–Ile218. Over Arg219–Arg222 the chain is Cytoplasmic. Residues Ile223 to Ile243 traverse the membrane as a helical segment. Residues Gln244–Thr264 lie on the Extracellular side of the membrane. Residues Tyr265–Leu285 form a helical membrane-spanning segment. At Glu286–Pro296 the chain is on the cytoplasmic side. The helical transmembrane segment at Ala297–Gly317 threads the bilayer. The Extracellular portion of the chain corresponds to Tyr318–Gly349. A helical transmembrane segment spans residues Ile350–Ile370. Over Ser371 to Leu379 the chain is Cytoplasmic. The helical transmembrane segment at Pro380–Ile400 threads the bilayer. Residues Pro401–Asp404 are Extracellular-facing. A helical transmembrane segment spans residues Leu405–Leu425. At Leu426–Ser437 the chain is on the cytoplasmic side. A helical membrane pass occupies residues Pro438 to Gly458. Topologically, residues Thr459–Arg483 are extracellular.

Belongs to the amino acid/polyamine transporter 2 family. As to expression, abundantly expressed in kidney and muscle. Expressed in the S1 segment of the proximal tubule close to the glomerulus.

It is found in the cell membrane. Its subcellular location is the endoplasmic reticulum membrane. The protein resides in the recycling endosome membrane. It carries out the reaction glycine(in) + H(+)(in) = glycine(out) + H(+)(out). The enzyme catalyses L-alanine(in) + H(+)(in) = L-alanine(out) + H(+)(out). The catalysed reaction is D-alanine(in) + H(+)(in) = D-alanine(out) + H(+)(out). It catalyses the reaction L-proline(out) + H(+)(out) = L-proline(in) + H(+)(in). It carries out the reaction D-proline(out) + H(+)(out) = D-proline(in) + H(+)(in). The enzyme catalyses 4-hydroxy-L-proline(in) + H(+)(in) = 4-hydroxy-L-proline(out) + H(+)(out). The catalysed reaction is L-serine(in) + H(+)(in) = L-serine(out) + H(+)(out). It catalyses the reaction D-serine(out) + H(+)(out) = D-serine(in) + H(+)(in). It carries out the reaction beta-alanine(in) + H(+)(in) = beta-alanine(out) + H(+)(out). The enzyme catalyses 4-aminobutanoate(in) + H(+)(in) = 4-aminobutanoate(out) + H(+)(out). The catalysed reaction is sarcosine(in) + H(+)(in) = sarcosine(out) + H(+)(out). It catalyses the reaction N,N-dimethylglycine(in) + H(+)(in) = N,N-dimethylglycine(out) + H(+)(out). Electrogenic proton/amino acid symporter with a high selectivity for the small side chains amino acids glycine, alanine and proline, where both L- and D-enantiomers are transported. Extension of the backbone length, as in beta-alanine and 4-aminobutanoate or methylation of the amino group, as in sarcosine and N,N-dimethylglycine, are also tolerated but decrease transport efficiency. A free carboxyl group is preferred. The sequence is that of Proton-coupled amino acid transporter 2 from Homo sapiens (Human).